A 941-amino-acid chain; its full sequence is Protein BREAST CANCER SUSCEPTIBILITY 1 homolog (941 aa).

An RING-type zinc finger spans residues 16–54; that stretch reads CPICLSLYNSAVSLSCNHVFCNACIVKSMKMDATCPVCK. 2 disordered regions span residues 87 to 282 and 303 to 528; these read FVSQ…ILPS and KVKV…GKDD. 2 stretches are compositionally biased toward basic and acidic residues: residues 96–115 and 125–136; these read SDKE…DKNR and KRNEYGKTKEID. Polar residues predominate over residues 157–173; the sequence is LLQNLSAESLTKPTESV. Residues 175-196 show a composition bias toward basic and acidic residues; the sequence is TAEKPKDYTENTVIRLDEHPSL. Polar residues predominate over residues 216–236; sequence NSSQRTESDQLLGTTPVNVPS. Residues 242 to 255 are compositionally biased toward basic and acidic residues; that stretch reads DSDHESPSKEDEQQ. Positions 298-305 match the Nuclear localization signal 1 motif; it reads QKKLPKVK. Composition is skewed to polar residues over residues 329-357 and 376-391; these read GVSQ…SGTI and SKAQ…NVSN. Basic and acidic residues-rich tracts occupy residues 428–453 and 477–487; these read GKGD…EKPS and KTSEKKLKLDS. The short motif at 444 to 451 is the Nuclear localization signal 2 element; it reads EKRSPTEK. Polar residues predominate over residues 489–498; sequence MISSKATQPH. Residues 512–528 show a composition bias toward basic and acidic residues; it reads DKQDSRNNRKSTVGKDD. The C2HC pre-PHD-type zinc finger occupies 561 to 612; the sequence is KFTCAFCQCSEDTEASGEMTHYYRGEPVSADFNGGSKVIHVHKNCAEWAPNV. The PHD-type; degenerate zinc finger occupies 632–681; that stretch reads ISCSCCGLKGAALGCYNKSCKNSFHVTCAKLIPECRWDNVKFVMLCPLDA. BRCT domains lie at 724-819 and 840-941; these read KQFH…PYEI and KKPK…LVLI.

As to quaternary structure, forms heterodimer with BARD1/ROW1. As to expression, expressed ubiquitously with highest levels in flower buds. Mostly expressed in flowers and siliques, and, to a lower extent, in roots, rosette leaves, inflorescence and young cauline leaves.

It localises to the nucleus. Its function is as follows. Plays a role in DNA repair and in cell-cycle control. Required for the repair of DNA double-strand breaks (DSBs), both natural and induced by genotoxic stress, by homologous recombination (HR). The polypeptide is Protein BREAST CANCER SUSCEPTIBILITY 1 homolog (Arabidopsis thaliana (Mouse-ear cress)).